We begin with the raw amino-acid sequence, 217 residues long: Uridylate kinase (217 aa).

Residue K5 to R9 participates in ATP binding. A UMP-binding site is contributed by G37. The ATP site is built by G38 and R42. UMP is bound by residues D59 and F107–T113. Positions 134, 139, and 142 each coordinate ATP.

It belongs to the UMP kinase family. Homohexamer.

The protein localises to the cytoplasm. The catalysed reaction is UMP + ATP = UDP + ADP. It participates in pyrimidine metabolism; CTP biosynthesis via de novo pathway; UDP from UMP (UMPK route): step 1/1. Inhibited by UTP. Catalyzes the reversible phosphorylation of UMP to UDP. This Pyrobaculum calidifontis (strain DSM 21063 / JCM 11548 / VA1) protein is Uridylate kinase.